The chain runs to 225 residues: Ribosome maturation factor RimM (225 aa).

The PRC barrel domain maps to 144 to 225; the sequence is ADEFYWVDLI…RIVVDWEADY (82 aa).

Belongs to the RimM family. As to quaternary structure, binds ribosomal protein uS19.

The protein resides in the cytoplasm. In terms of biological role, an accessory protein needed during the final step in the assembly of 30S ribosomal subunit, possibly for assembly of the head region. Essential for efficient processing of 16S rRNA. May be needed both before and after RbfA during the maturation of 16S rRNA. It has affinity for free ribosomal 30S subunits but not for 70S ribosomes. In Burkholderia lata (strain ATCC 17760 / DSM 23089 / LMG 22485 / NCIMB 9086 / R18194 / 383), this protein is Ribosome maturation factor RimM.